The primary structure comprises 129 residues: Regulator of ribonuclease activity B (129 aa).

The protein belongs to the RraB family. Interacts with the C-terminal region of Rne.

The protein localises to the cytoplasm. Functionally, globally modulates RNA abundance by binding to RNase E (Rne) and regulating its endonucleolytic activity. Can modulate Rne action in a substrate-dependent manner by altering the composition of the degradosome. In Shewanella denitrificans (strain OS217 / ATCC BAA-1090 / DSM 15013), this protein is Regulator of ribonuclease activity B.